The following is a 470-amino-acid chain: ATP synthase subunit beta (470 aa).

Residue 155 to 162 coordinates ATP; it reads GGAGVGKT.

The protein belongs to the ATPase alpha/beta chains family. F-type ATPases have 2 components, CF(1) - the catalytic core - and CF(0) - the membrane proton channel. CF(1) has five subunits: alpha(3), beta(3), gamma(1), delta(1), epsilon(1). CF(0) has three main subunits: a(1), b(2) and c(9-12). The alpha and beta chains form an alternating ring which encloses part of the gamma chain. CF(1) is attached to CF(0) by a central stalk formed by the gamma and epsilon chains, while a peripheral stalk is formed by the delta and b chains.

The protein resides in the cell inner membrane. It catalyses the reaction ATP + H2O + 4 H(+)(in) = ADP + phosphate + 5 H(+)(out). Its function is as follows. Produces ATP from ADP in the presence of a proton gradient across the membrane. The catalytic sites are hosted primarily by the beta subunits. The sequence is that of ATP synthase subunit beta from Oleidesulfovibrio alaskensis (strain ATCC BAA-1058 / DSM 17464 / G20) (Desulfovibrio alaskensis).